We begin with the raw amino-acid sequence, 592 residues long: Aspartate--tRNA(Asp/Asn) ligase (592 aa).

E177 lines the L-aspartate pocket. The interval 201 to 204 (QLFK) is aspartate. L-aspartate is bound at residue R223. ATP-binding positions include 223–225 (RDE) and Q232. Position 451 (H451) interacts with L-aspartate. Residue E485 coordinates ATP. L-aspartate is bound at residue R492. 537-540 (GLDR) lines the ATP pocket.

It belongs to the class-II aminoacyl-tRNA synthetase family. Type 1 subfamily. In terms of assembly, homodimer.

The protein resides in the cytoplasm. It carries out the reaction tRNA(Asx) + L-aspartate + ATP = L-aspartyl-tRNA(Asx) + AMP + diphosphate. Its function is as follows. Aspartyl-tRNA synthetase with relaxed tRNA specificity since it is able to aspartylate not only its cognate tRNA(Asp) but also tRNA(Asn). Reaction proceeds in two steps: L-aspartate is first activated by ATP to form Asp-AMP and then transferred to the acceptor end of tRNA(Asp/Asn). The chain is Aspartate--tRNA(Asp/Asn) ligase from Bacillus subtilis (strain 168).